A 485-amino-acid chain; its full sequence is Glutamate--tRNA ligase (485 aa).

A 'HIGH' region motif is present at residues 11-21; sequence PSPTGYMHVGN. Residues C108, C110, C135, and D137 each contribute to the Zn(2+) site. A 'KMSKS' region motif is present at residues 252–256; sequence KLSKR. An ATP-binding site is contributed by K255.

This sequence belongs to the class-I aminoacyl-tRNA synthetase family. Glutamate--tRNA ligase type 1 subfamily. In terms of assembly, monomer. Zn(2+) is required as a cofactor.

Its subcellular location is the cytoplasm. It catalyses the reaction tRNA(Glu) + L-glutamate + ATP = L-glutamyl-tRNA(Glu) + AMP + diphosphate. Functionally, catalyzes the attachment of glutamate to tRNA(Glu) in a two-step reaction: glutamate is first activated by ATP to form Glu-AMP and then transferred to the acceptor end of tRNA(Glu). The protein is Glutamate--tRNA ligase of Clostridium botulinum (strain Loch Maree / Type A3).